A 436-amino-acid polypeptide reads, in one-letter code: Xaa-Arg dipeptidase (436 aa).

The protein belongs to the peptidase M20A family.

The enzyme catalyses beta-alanyl-L-lysine + H2O = beta-alanine + L-lysine. The catalysed reaction is beta-alanyl-L-ornithine + H2O = beta-alanine + L-ornithine. It carries out the reaction N(2)-(4-aminobutanoyl)-L-lysine + H2O = 4-aminobutanoate + L-lysine. It catalyses the reaction N(2)-(4-aminobutanoyl)-L-ornithine + H2O = 4-aminobutanoate + L-ornithine. The enzyme catalyses N(2)-(4-aminobutanoyl)-L-arginine + H2O = 4-aminobutanoate + L-arginine. Functionally, catalyzes the peptide bond hydrolysis in dipeptides having basic amino acids lysine, ornithine or arginine at C-terminus. Postulated to function in a metabolite repair mechanism by eliminating alternate dipeptide by-products formed during carnosine synthesis. The sequence is that of Xaa-Arg dipeptidase from Homo sapiens (Human).